A 264-amino-acid chain; its full sequence is 3-methyl-2-oxobutanoate hydroxymethyltransferase (264 aa).

The Mg(2+) site is built by D45 and D84. 3-methyl-2-oxobutanoate contacts are provided by residues 45–46 (DS), D84, and K112. E114 is a binding site for Mg(2+). Residue E181 is the Proton acceptor of the active site.

It belongs to the PanB family. As to quaternary structure, homodecamer; pentamer of dimers. The cofactor is Mg(2+).

Its subcellular location is the cytoplasm. The catalysed reaction is 3-methyl-2-oxobutanoate + (6R)-5,10-methylene-5,6,7,8-tetrahydrofolate + H2O = 2-dehydropantoate + (6S)-5,6,7,8-tetrahydrofolate. It participates in cofactor biosynthesis; (R)-pantothenate biosynthesis; (R)-pantoate from 3-methyl-2-oxobutanoate: step 1/2. In terms of biological role, catalyzes the reversible reaction in which hydroxymethyl group from 5,10-methylenetetrahydrofolate is transferred onto alpha-ketoisovalerate to form ketopantoate. The protein is 3-methyl-2-oxobutanoate hydroxymethyltransferase of Shewanella sp. (strain ANA-3).